The primary structure comprises 207 residues: Recombination protein RecR (207 aa).

Residues 60–75 (CRRCHNISDSGVCTIC) form a C4-type zinc finger. Positions 83–178 (STLCVVENIR…RVSVIARGIA (96 aa)) constitute a Toprim domain.

It belongs to the RecR family.

Its function is as follows. May play a role in DNA repair. It seems to be involved in an RecBC-independent recombinational process of DNA repair. It may act with RecF and RecO. The protein is Recombination protein RecR of Porphyromonas gingivalis (strain ATCC 33277 / DSM 20709 / CIP 103683 / JCM 12257 / NCTC 11834 / 2561).